A 452-amino-acid chain; its full sequence is Isocitrate dehydrogenase [NADP], mitochondrial (452 aa).

A mitochondrion-targeting transit peptide spans 1 to 39 (MAGYLRAVSSLCRASGSTRTWAPAALNVPSWPEQPRRHY). N6-acetyllysine occurs at positions 45, 48, 67, and 69. Residues K80 and K106 each carry the N6-acetyllysine; alternate modification. An N6-succinyllysine; alternate mark is found at K80 and K106. NADP(+) is bound by residues 115–117 (TIT) and R122. A D-threo-isocitrate-binding site is contributed by T117. Residues 134–140 (SPNGTIR) and R149 each bind D-threo-isocitrate. K155 bears the N6-acetyllysine mark. An N6-acetyllysine; alternate modification is found at K166. N6-succinyllysine; alternate is present on K166. D-threo-isocitrate is bound at residue R172. K180 and K193 each carry N6-acetyllysine; alternate. N6-succinyllysine; alternate is present on residues K180 and K193. K199 bears the N6-acetyllysine mark. At K256 the chain carries N6-acetyllysine; alternate. At K256 the chain carries N6-succinyllysine; alternate. N6-acetyllysine is present on residues K263, K272, K275, and K280. Position 282 is an N6-acetyllysine; alternate (K282). Position 282 is an N6-succinyllysine; alternate (K282). D291 contacts Mn(2+). NADP(+) is bound at residue K299. D314 serves as a coordination point for Mn(2+). NADP(+) is bound by residues 349–354 (GTVTRH) and N367. An N6-acetyllysine; alternate modification is found at K384. Position 384 is an N6-succinyllysine; alternate (K384). N6-acetyllysine is present on residues K400, K413, and K442.

The protein belongs to the isocitrate and isopropylmalate dehydrogenases family. As to quaternary structure, homodimer. The cofactor is Mg(2+). Mn(2+) is required as a cofactor. In terms of processing, acetylation at Lys-413 dramatically reduces catalytic activity. Deacetylated by SIRT3.

The protein localises to the mitochondrion. The catalysed reaction is D-threo-isocitrate + NADP(+) = 2-oxoglutarate + CO2 + NADPH. Functionally, plays a role in intermediary metabolism and energy production. It may tightly associate or interact with the pyruvate dehydrogenase complex. The sequence is that of Isocitrate dehydrogenase [NADP], mitochondrial (Idh2) from Rattus norvegicus (Rat).